A 407-amino-acid polypeptide reads, in one-letter code: Na(+)-translocating NADH-quinone reductase subunit F (407 aa).

A helical transmembrane segment spans residues Ile-3–Phe-23. The 2Fe-2S ferredoxin-type domain maps to Gly-32–Ile-126. Positions 69, 75, 78, and 110 each coordinate [2Fe-2S] cluster. The FAD-binding FR-type domain occupies Val-129–Lys-269.

Belongs to the NqrF family. In terms of assembly, composed of six subunits; NqrA, NqrB, NqrC, NqrD, NqrE and NqrF. Requires [2Fe-2S] cluster as cofactor. The cofactor is FAD.

The protein localises to the cell inner membrane. The enzyme catalyses a ubiquinone + n Na(+)(in) + NADH + H(+) = a ubiquinol + n Na(+)(out) + NAD(+). Functionally, NQR complex catalyzes the reduction of ubiquinone-1 to ubiquinol by two successive reactions, coupled with the transport of Na(+) ions from the cytoplasm to the periplasm. The first step is catalyzed by NqrF, which accepts electrons from NADH and reduces ubiquinone-1 to ubisemiquinone by a one-electron transfer pathway. This Serratia proteamaculans (strain 568) protein is Na(+)-translocating NADH-quinone reductase subunit F.